The following is a 645-amino-acid chain: Sodium/hydrogen exchanger 9 (645 aa).

The Lumenal portion of the chain corresponds to 1 to 20; sequence MERQSRVMSEKDEYQFQHQG. A helical membrane pass occupies residues 21-41; it reads AVELLVFNFLLILTILTIWLF. At 42 to 45 the chain is on the cytoplasmic side; it reads KNHR. The helical transmembrane segment at 46–66 threads the bilayer; it reads FRFLHETGGAMVYGLIMGLIL. At 67–126 the chain is on the lumenal side; sequence RYATAPTDIESGTVYDCVKLTFSPSTLLVNITDQVYEYKYKREISQHNINPHQGNAILEK. The N-linked (GlcNAc...) asparagine glycan is linked to Asn-96. Residues 127 to 147 form a helical membrane-spanning segment; the sequence is MTFDPEIFFNVLLPPIIFHAG. The Cytoplasmic portion of the chain corresponds to 148–164; it reads YSLKKRHFFQNLGSILT. The chain crosses the membrane as a helical span at residues 165–185; it reads YAFLGTAISCIVIGLIMYGFV. The Lumenal portion of the chain corresponds to 186-203; it reads KAMIHAGQLKNGDFHFTD. The helical transmembrane segment at 204-224 threads the bilayer; it reads CLFFGSLMSATDPVTVLAIFH. The Cytoplasmic portion of the chain corresponds to 225–235; the sequence is ELHVDPDLYTL. Residues 236–256 form a helical membrane-spanning segment; it reads LFGESVLNDAVAIVLTYSISI. At 257-277 the chain is on the lumenal side; that stretch reads YSPKENPNAFDAAAFFQSVGN. The chain crosses the membrane as a helical span at residues 278–298; that stretch reads FLGIFAGSFAMGSAYAIITAL. Over 299-301 the chain is Cytoplasmic; the sequence is LTK. 2 consecutive transmembrane segments (helical) span residues 302 to 322 and 323 to 343; these read FTKL…LSWS and AFLS…FCGV. Topologically, residues 344 to 364 are cytoplasmic; it reads TQAHYTYNNLSSDSKIRTKQL. Residues 365-385 traverse the membrane as a helical segment; that stretch reads FEFMNFLAENVIFCYMGLALF. Position 386 (Thr-386) is a topological domain, lumenal. Residues 387 to 407 traverse the membrane as a helical segment; that stretch reads FQNHIFNALFILGAFLAIFVA. The Cytoplasmic segment spans residues 408–429; that stretch reads RACNIYPLSFLLNLGRKQKIPW. Residues 430 to 450 form a helical membrane-spanning segment; it reads NFQHMMMFSGLRGAIAFALAI. Topologically, residues 451–465 are lumenal; sequence RNTESQPKQMMFTTT. The chain crosses the membrane as a helical span at residues 466–486; the sequence is LLLVFFTVWVFGGGTTPMLTW. The Cytoplasmic segment spans residues 487 to 645; it reads LQIRVGVDLD…EQTLGQSQLN (159 aa). The disordered stretch occupies residues 594–622; it reads QASSPCSPPARLGLDQKASPQTPGKENIY.

The protein belongs to the monovalent cation:proton antiporter 1 (CPA1) transporter (TC 2.A.36) family. In terms of assembly, homodimer; phosphatidylinositol-4,5-bisphosphate (PIP2) and phosphatidylinositol 3,4,5-trisphosphate (PIP3) could be involved in the dimer stabilization. Interacts (via the C-terminus) with RACK1. Interacts with CHP1. Ubiquitously expressed in all tissues tested. Expressed at highest levels in heart and skeletal muscle, followed by placenta, kidney, and liver. Expressed in the brain, in the medulla and spinal cord.

Its subcellular location is the late endosome membrane. It is found in the early endosome membrane. The protein resides in the recycling endosome membrane. The protein localises to the cell membrane. It localises to the cytoplasmic vesicle. Its subcellular location is the phagosome membrane. The catalysed reaction is Na(+)(in) + H(+)(out) = Na(+)(out) + H(+)(in). The enzyme catalyses K(+)(in) + H(+)(out) = K(+)(out) + H(+)(in). In terms of biological role, endosomal Na(+), K(+)/H(+) antiporter. Mediates the electroneutral exchange of endosomal luminal H(+) for a cytosolic Na(+) or K(+). By facilitating proton efflux, SLC9A9 counteracts the acidity generated by vacuolar (V)-ATPase, thereby limiting luminal acidification. Regulates organellar pH and consequently, e.g., endosome maturation and endocytic trafficking of plasma membrane receptors and neurotransporters. Promotes the recycling of transferrin receptors back to the cell surface to facilitate additional iron uptake in the brain. Regulates synaptic transmission by regulating the luminal pH of axonal endosomes. Regulates phagosome lumenal pH, thus affecting phagosome maturation, and consequently, microbicidal activity in macrophages. Can also be active at the cell surface of specialized cells, e.g., in the inner ear hair bundles uses the high K(+) of the endolymph to regulate intracelular pH. This chain is Sodium/hydrogen exchanger 9, found in Homo sapiens (Human).